Reading from the N-terminus, the 127-residue chain is Fatty acid binding protein 1-A, liver (127 aa).

This sequence belongs to the calycin superfamily. Fatty-acid binding protein (FABP) family. In adults, weakly expressed in the intestine.

Its subcellular location is the cytoplasm. In terms of biological role, binds free fatty acids and their coenzyme A derivatives, bilirubin, and some other small molecules in the cytoplasm. May be involved in intracellular lipid transport. The protein is Fatty acid binding protein 1-A, liver of Danio rerio (Zebrafish).